A 264-amino-acid chain; its full sequence is Hydroxyethylthiazole kinase (264 aa).

A substrate-binding site is contributed by Met43. ATP is bound by residues Arg119 and Thr165. Residue Gly192 coordinates substrate.

It belongs to the Thz kinase family. The cofactor is Mg(2+).

The catalysed reaction is 5-(2-hydroxyethyl)-4-methylthiazole + ATP = 4-methyl-5-(2-phosphooxyethyl)-thiazole + ADP + H(+). The protein operates within cofactor biosynthesis; thiamine diphosphate biosynthesis; 4-methyl-5-(2-phosphoethyl)-thiazole from 5-(2-hydroxyethyl)-4-methylthiazole: step 1/1. Catalyzes the phosphorylation of the hydroxyl group of 4-methyl-5-beta-hydroxyethylthiazole (THZ). The sequence is that of Hydroxyethylthiazole kinase from Anoxybacillus flavithermus (strain DSM 21510 / WK1).